The sequence spans 289 residues: Membrane protein insertase YidC (289 aa).

The first 19 residues, 1 to 19 (MKKKALLPLLLGIMVFLAG), serve as a signal peptide directing secretion. C20 carries N-palmitoyl cysteine lipidation. C20 is lipidated: S-diacylglycerol cysteine. The next 5 membrane-spanning stretches (helical) occupy residues 55-75 (YGLAIIVLVLAIRIIVLPFML), 133-153 (MLGCLPMLIQMPIIMGLFFVL), 177-197 (IWITVIAGVLYFLQAYVSTFS), 210-230 (MIISPIMIIWVSLSSAAALGL), and 231-251 (YWSVSAAFLIVQTYIANAYYS). Positions 268-289 (EHGGSGNSKGAKVVSKKNKKKK) are disordered.

This sequence belongs to the OXA1/ALB3/YidC family. Type 2 subfamily.

Its subcellular location is the cell membrane. Its function is as follows. Required for the insertion and/or proper folding and/or complex formation of integral membrane proteins into the membrane. Involved in integration of membrane proteins that insert both dependently and independently of the Sec translocase complex, as well as at least some lipoproteins. This is Membrane protein insertase YidC from Staphylococcus carnosus (strain TM300).